Here is a 208-residue protein sequence, read N- to C-terminus: Putative dioxygenase RT0384 (208 aa).

This sequence belongs to the intradiol ring-cleavage dioxygenase family.

The chain is Putative dioxygenase RT0384 from Rickettsia typhi (strain ATCC VR-144 / Wilmington).